We begin with the raw amino-acid sequence, 196 residues long: Orotate phosphoribosyltransferase (196 aa).

117-125 is a 5-phospho-alpha-D-ribose 1-diphosphate binding site; that stretch reads EDVVTTGLS. Residues threonine 121 and arginine 149 each contribute to the orotate site.

It belongs to the purine/pyrimidine phosphoribosyltransferase family. PyrE subfamily. As to quaternary structure, homodimer. The cofactor is Mg(2+).

It carries out the reaction orotidine 5'-phosphate + diphosphate = orotate + 5-phospho-alpha-D-ribose 1-diphosphate. It functions in the pathway pyrimidine metabolism; UMP biosynthesis via de novo pathway; UMP from orotate: step 1/2. Functionally, catalyzes the transfer of a ribosyl phosphate group from 5-phosphoribose 1-diphosphate to orotate, leading to the formation of orotidine monophosphate (OMP). The protein is Orotate phosphoribosyltransferase of Rhizorhabdus wittichii (strain DSM 6014 / CCUG 31198 / JCM 15750 / NBRC 105917 / EY 4224 / RW1) (Sphingomonas wittichii).